The chain runs to 176 residues: RNA pyrophosphohydrolase (176 aa).

The Nudix hydrolase domain maps to 6-149; sequence GYRPNVGIVI…KRDVYRRVMK (144 aa). Positions 38-59 match the Nudix box motif; the sequence is GGINPGESAEQAMYRELFEEVG.

The protein belongs to the Nudix hydrolase family. RppH subfamily. Requires a divalent metal cation as cofactor.

In terms of biological role, accelerates the degradation of transcripts by removing pyrophosphate from the 5'-end of triphosphorylated RNA, leading to a more labile monophosphorylated state that can stimulate subsequent ribonuclease cleavage. In Klebsiella pneumoniae (strain 342), this protein is RNA pyrophosphohydrolase.